The chain runs to 336 residues: Glyceraldehyde-3-phosphate dehydrogenase (336 aa).

NAD(+) contacts are provided by residues 12–13 (RI), aspartate 34, arginine 78, and threonine 121. D-glyceraldehyde 3-phosphate contacts are provided by residues 151–153 (SCT), threonine 182, arginine 199, 212–213 (TG), and arginine 235. Cysteine 152 (nucleophile) is an active-site residue. NAD(+) is bound at residue asparagine 316.

Belongs to the glyceraldehyde-3-phosphate dehydrogenase family. In terms of assembly, homotetramer.

The protein localises to the cytoplasm. It carries out the reaction D-glyceraldehyde 3-phosphate + phosphate + NAD(+) = (2R)-3-phospho-glyceroyl phosphate + NADH + H(+). Its pathway is carbohydrate degradation; glycolysis; pyruvate from D-glyceraldehyde 3-phosphate: step 1/5. Functionally, catalyzes the oxidative phosphorylation of glyceraldehyde 3-phosphate (G3P) to 1,3-bisphosphoglycerate (BPG) using the cofactor NAD. The first reaction step involves the formation of a hemiacetal intermediate between G3P and a cysteine residue, and this hemiacetal intermediate is then oxidized to a thioester, with concomitant reduction of NAD to NADH. The reduced NADH is then exchanged with the second NAD, and the thioester is attacked by a nucleophilic inorganic phosphate to produce BPG. The sequence is that of Glyceraldehyde-3-phosphate dehydrogenase (gap) from Streptococcus pyogenes serotype M1.